A 372-amino-acid polypeptide reads, in one-letter code: Spermidine/putrescine import ATP-binding protein PotA (372 aa).

An ABC transporter domain is found at 12-242 (IQLKGLNKSF…PTNLFVARFI (231 aa)). ATP is bound at residue 44 to 51 (GPSGCGKT).

It belongs to the ABC transporter superfamily. Spermidine/putrescine importer (TC 3.A.1.11.1) family. The complex is composed of two ATP-binding proteins (PotA), two transmembrane proteins (PotB and PotC) and a solute-binding protein (PotD).

It localises to the cell inner membrane. It catalyses the reaction ATP + H2O + polyamine-[polyamine-binding protein]Side 1 = ADP + phosphate + polyamineSide 2 + [polyamine-binding protein]Side 1.. In terms of biological role, part of the ABC transporter complex PotABCD involved in spermidine/putrescine import. Responsible for energy coupling to the transport system. This is Spermidine/putrescine import ATP-binding protein PotA from Photobacterium profundum (strain SS9).